Reading from the N-terminus, the 376-residue chain is S-adenosylmethionine synthase (376 aa).

His-15 is a binding site for ATP. Residue Asp-17 coordinates Mg(2+). Glu-43 contacts K(+). Positions 56 and 92 each coordinate L-methionine. The flexible loop stretch occupies residues 92 to 102 (QSKEIANQVDR). ATP-binding positions include 156–158 (DMK), Asp-231, 237–238 (RK), Ala-254, and Lys-258. L-methionine is bound at residue Asp-231. Residue Lys-262 participates in L-methionine binding.

It belongs to the AdoMet synthase family. Homotetramer; dimer of dimers. It depends on Mg(2+) as a cofactor. The cofactor is K(+).

It localises to the cytoplasm. It carries out the reaction L-methionine + ATP + H2O = S-adenosyl-L-methionine + phosphate + diphosphate. It participates in amino-acid biosynthesis; S-adenosyl-L-methionine biosynthesis; S-adenosyl-L-methionine from L-methionine: step 1/1. Functionally, catalyzes the formation of S-adenosylmethionine (AdoMet) from methionine and ATP. The overall synthetic reaction is composed of two sequential steps, AdoMet formation and the subsequent tripolyphosphate hydrolysis which occurs prior to release of AdoMet from the enzyme. The protein is S-adenosylmethionine synthase of Mycoplasmopsis pulmonis (strain UAB CTIP) (Mycoplasma pulmonis).